A 246-amino-acid polypeptide reads, in one-letter code: tRNA (guanine-N(1)-)-methyltransferase (246 aa).

S-adenosyl-L-methionine is bound by residues glycine 113 and isoleucine 133 to leucine 138.

This sequence belongs to the RNA methyltransferase TrmD family. In terms of assembly, homodimer.

The protein localises to the cytoplasm. It catalyses the reaction guanosine(37) in tRNA + S-adenosyl-L-methionine = N(1)-methylguanosine(37) in tRNA + S-adenosyl-L-homocysteine + H(+). In terms of biological role, specifically methylates guanosine-37 in various tRNAs. This chain is tRNA (guanine-N(1)-)-methyltransferase, found in Haemophilus influenzae (strain PittGG).